A 611-amino-acid polypeptide reads, in one-letter code: L-tyrosine decarboxylase (611 aa).

Pyridoxal 5'-phosphate is bound by residues 151–152 (GS), T292, and 382–384 (DPH). An N6-(pyridoxal phosphate)lysine modification is found at K385. Y413 functions as the Proton donor in the catalytic mechanism. S433 serves as a coordination point for pyridoxal 5'-phosphate.

Belongs to the group II decarboxylase family. Tyrosine decarboxylase subfamily. Homodimer. Requires pyridoxal 5'-phosphate as cofactor.

It catalyses the reaction L-tyrosine + H(+) = tyramine + CO2. The enzyme catalyses L-dopa + H(+) = dopamine + CO2. It participates in amino-acid metabolism. Levodopa decarboxylation is not inhibited by carbidopa, benserazide, and methyldopa, that are three human L-dopa decarboxylase inhibitors. In terms of biological role, catalyzes the decarboxylation of L-tyrosine to produce tyramine. Plays a role in acid resistance since tyramine production via tyrosine decarboxylation appears to provide a cytosolic pH maintenance mechanism that helps the bacterium cope with acid stress such as that encountered in gastrointestinal tract (GIT) environments. Therefore, may contribute to the colonization of the human GIT by E.faecium. Functionally, also involved in drug metabolism, being able to catalyze decarboxylation of levodopa (L-dopa) to dopamine. In gut microbiota this enzyme is in fact exclusively responsible for the decarboxylation of levodopa, and thus reduces in situ levels of levodopa in the treatment of Parkinson's disease. It was shown that abundance of bacterial tyrosine decarboxylase in the proximal small intestine - the primary site of levodopa absorption - contributes to interindividual variation in drug efficacy and can explain the requirement for an increased dosage regimen of levodopa treatment in Parkinson's disease patients. This is L-tyrosine decarboxylase from Enterococcus faecium (Streptococcus faecium).